Here is an 85-residue protein sequence, read N- to C-terminus: Putative membrane protein insertion efficiency factor (85 aa).

It belongs to the UPF0161 family.

The protein localises to the cell membrane. Could be involved in insertion of integral membrane proteins into the membrane. Functionally, lyses fish blood cells. The polypeptide is Putative membrane protein insertion efficiency factor (hlyA) (Aeromonas hydrophila).